A 38-amino-acid chain; its full sequence is Large ribosomal subunit protein bL36 (38 aa).

It belongs to the bacterial ribosomal protein bL36 family.

The sequence is that of Large ribosomal subunit protein bL36 from Ectopseudomonas mendocina (strain ymp) (Pseudomonas mendocina).